Consider the following 1383-residue polypeptide: Putative autophagy-related protein 11 (1383 aa).

Coiled coils occupy residues 16–49 (DKNNDILISKQKIEDLKKSIENLLNDKNAHYELN) and 117–324 (NLFL…QNKE). Basic and acidic residues-rich tracts occupy residues 1151 to 1224 (EEEK…EDRK) and 1233 to 1249 (HSSDKEEKYNKKEKTKE). The segment at 1151-1249 (EEEKKKNEEE…KYNKKEKTKE (99 aa)) is disordered.

The protein belongs to the ATG11 family.

Involved in cytoplasm to vacuole transport (Cvt), pexophagy, mitophagy and nucleophagy. Works as scaffold proteins that recruit ATG proteins to the pre-autophagosome (PAS), the site of vesicle/autophagosome formation. This chain is Putative autophagy-related protein 11, found in Plasmodium falciparum (isolate 3D7).